The sequence spans 241 residues: MTTNPKPAYQRILLKLSGEALQGSEGFGIDPTVLDRMAQEVKELVELGVQVGVVIGGGNLFRGAGLAQAGMNRVVGDHMGMLATVMNGLAMRDALHRAYVNARVMSAIPLNGVCDDYNWADAIRELRQGRVVIFAAGTGNPFFTTDSAACLRGIEIEADVVLKATKVDGVFTADPVANPDAELYDKLSYTDVLEKELKVMDLAAFTLARDHKMPIRVFNMNKPGALRRVVMGEAEGTLITA.

15 to 18 (KLSG) serves as a coordination point for ATP. The involved in allosteric activation by GTP stretch occupies residues 23–28 (GSEGFG). Gly57 contacts UMP. Residues Gly58 and Arg62 each contribute to the ATP site. UMP-binding positions include Asp77 and 138 to 145 (TGNPFFTT). ATP contacts are provided by Thr165, Phe171, and Asp174.

Belongs to the UMP kinase family. Homohexamer.

Its subcellular location is the cytoplasm. It carries out the reaction UMP + ATP = UDP + ADP. It participates in pyrimidine metabolism; CTP biosynthesis via de novo pathway; UDP from UMP (UMPK route): step 1/1. With respect to regulation, allosterically activated by GTP. Inhibited by UTP. In terms of biological role, catalyzes the reversible phosphorylation of UMP to UDP. In Vibrio vulnificus (strain CMCP6), this protein is Uridylate kinase.